Here is a 328-residue protein sequence, read N- to C-terminus: Ribosomal RNA small subunit methyltransferase C (328 aa).

This sequence belongs to the methyltransferase superfamily. RsmC family. Monomer.

It is found in the cytoplasm. The enzyme catalyses guanosine(1207) in 16S rRNA + S-adenosyl-L-methionine = N(2)-methylguanosine(1207) in 16S rRNA + S-adenosyl-L-homocysteine + H(+). In terms of biological role, specifically methylates the guanine in position 1207 of 16S rRNA in the 30S particle. The sequence is that of Ribosomal RNA small subunit methyltransferase C from Pasteurella multocida (strain Pm70).